The chain runs to 505 residues: Alpha-1-syntrophin (505 aa).

Disordered regions lie at residues 1–24 (MASG…AGAG) and 40–75 (LTVS…AAPP). PH domains are found at residues 6–269 (RAPR…AQIN) and 293–401 (DIKQ…DGCH). Residues 9-18 (RTGLLELRAG) are compositionally biased toward low complexity. The PDZ domain occupies 87–170 (RVTVRKADAG…EVVLEVKYMK (84 aa)). Residues serine 101, serine 184, serine 189, serine 193, and serine 200 each carry the phosphoserine modification. Residues 183–212 (TSVGWDSPPASPLQRQPSSPGPQTRNLSEA) are disordered. The segment covering 195–209 (LQRQPSSPGPQTRNL) has biased composition (polar residues). Positions 449–505 (PFEKLQMSSDDGASLLFLDFGGAEGEIQLDLHSCPKTMVFIIHSFLSAKVTRLGLLA) constitute an SU domain. Residues 483–505 (PKTMVFIIHSFLSAKVTRLGLLA) form a calmodulin-binding region.

Belongs to the syntrophin family. Monomer and homodimer. Interacts with the dystrophin related protein DTNA; SGCG of the dystrophin glycoprotein complex; NOS1; GRB2; GA; TGFA; MAPK12 and the sodium channel proteins SCN4A and SCN5A. Interacts with the dystrophin protein DMD in a calmodulin dependent manner and with related protein UTRN; SGCA of the dystrophin glycoprotein complex; F-actin; calmodulin and with the other members of the syntrophin family SNTB1 and SNTB2. Interacts with MYOC; regulates muscle hypertrophy. Interacts with DTNB. Post-translationally, phosphorylated by CaM-kinase II. Phosphorylation may inhibit the interaction with DMD. Highly expressed in skeletal and cardiac muscle and is also detected in brain.

It localises to the cell membrane. The protein localises to the sarcolemma. Its subcellular location is the cell junction. It is found in the cytoplasm. The protein resides in the cytoskeleton. Adapter protein that binds to and probably organizes the subcellular localization of a variety of membrane proteins. May link various receptors to the actin cytoskeleton and the extracellular matrix via dystrophin glycoprotein complex. Plays an important role in synapse formation and in the organization of UTRN and acetylcholine receptors at the neuromuscular synapse. Binds to phosphatidylinositol 4,5-bisphosphate. This is Alpha-1-syntrophin (SNTA1) from Oryctolagus cuniculus (Rabbit).